A 288-amino-acid chain; its full sequence is Zinc finger protein 42 (288 aa).

Basic and acidic residues-rich tracts occupy residues 1–11 and 26–38; these read MNEQKMNEQMK and ALDR…DEAR. The interval 1 to 48 is disordered; it reads MNEQKMNEQMKKTAKTSGQKGPGGRALDRLTLKQDEARPVQNTRVEAP. 4 consecutive C2H2-type zinc fingers follow at residues 170-194, 199-221, 227-251, and 258-281; these read LECP…MLVH, HVCA…FLVH, YQCT…IRIH, and VCPF…ILTH. Glycyl lysine isopeptide (Lys-Gly) (interchain with G-Cter in ubiquitin) cross-links involve residues lysine 213 and lysine 215.

It belongs to the krueppel C2H2-type zinc-finger protein family. Post-translationally, polyubiquitinated by RNF12, leading to proteasomal degradation. In terms of tissue distribution, restricted to testis, to germ cells in the early stages of spermatogenesis. Not expressed in spermatids, nor spermatozoa. Expressed in embryonic stem (ES) cells.

Its subcellular location is the nucleus. Its function is as follows. Involved in the reprogramming of X-chromosome inactivation during the acquisition of pluripotency. Required for efficient elongation of TSIX, a non-coding RNA antisense to XIST. Binds DXPas34 enhancer within the TSIX promoter. Involved in ES cell self-renewal. The protein is Zinc finger protein 42 (Zfp42) of Mus musculus (Mouse).